The chain runs to 1160 residues: Protein translocase subunit SecA (1160 aa).

ATP contacts are provided by residues glutamine 162 and 180–184 (GEGKT). Positions 342–362 (LLEEKEEAEEEGDSRRAQELE) are disordered. Positions 344-353 (EEKEEAEEEG) are enriched in acidic residues. Aspartate 726 is a binding site for ATP. The interval 1060–1134 (EVQTEGQGPR…RNEYVTVRNN (75 aa)) is disordered. The span at 1074–1083 (QRNAQTQHDS) shows a compositional bias: polar residues. A compositionally biased stretch (basic and acidic residues) spans 1104-1115 (AAERDPTVEEKQ).

It belongs to the SecA family. In terms of assembly, monomer and homodimer. Part of the essential Sec protein translocation apparatus which comprises SecA, SecYEG and auxiliary proteins SecDF. Other proteins may also be involved.

The protein resides in the cell inner membrane. Its subcellular location is the cytoplasm. The catalysed reaction is ATP + H2O + cellular proteinSide 1 = ADP + phosphate + cellular proteinSide 2.. Its function is as follows. Part of the Sec protein translocase complex. Interacts with the SecYEG preprotein conducting channel. Has a central role in coupling the hydrolysis of ATP to the transfer of proteins into and across the cell membrane, serving as an ATP-driven molecular motor driving the stepwise translocation of polypeptide chains across the membrane. The chain is Protein translocase subunit SecA from Salinibacter ruber (strain DSM 13855 / M31).